Here is a 197-residue protein sequence, read N- to C-terminus: Probable calcium-binding protein CML21 (197 aa).

Positions 1–33 (MLRPPPPSSVLTASAAAARPPASVVQPQRQAAH) are disordered. Residues 9-30 (SVLTASAAAARPPASVVQPQRQ) are compositionally biased toward low complexity. 3 EF-hand domains span residues 37–72 (AETL…LGAR), 126–161 (EKEA…MGLP), and 164–197 (ACMA…AAGN). Residues aspartate 50, aspartate 52, aspartate 54, glutamate 61, aspartate 139, aspartate 141, aspartate 143, tyrosine 145, glutamate 150, aspartate 177, aspartate 179, aspartate 181, arginine 183, and glutamate 188 each contribute to the Ca(2+) site.

Functionally, potential calcium sensor. The sequence is that of Probable calcium-binding protein CML21 (CML21) from Oryza sativa subsp. japonica (Rice).